A 461-amino-acid polypeptide reads, in one-letter code: Phytase PHO112 (461 aa).

3 disulfides stabilise this stretch: Cys62–Cys384, Cys261–Cys274, and Cys404–Cys412. 4 residues coordinate 1D-myo-inositol hexakisphosphate: Arg72, His73, Arg76, and Ser79. The Nucleophile role is filled by His73. Asn97 and Asn157 each carry an N-linked (GlcNAc...) asparagine glycan. Arg169 provides a ligand contact to 1D-myo-inositol hexakisphosphate. N-linked (GlcNAc...) asparagine glycosylation is found at Asn229 and Asn248. Lys293 lines the 1D-myo-inositol hexakisphosphate pocket. Asn302 and Asn313 each carry an N-linked (GlcNAc...) asparagine glycan. Residues His334 and Asp335 each coordinate 1D-myo-inositol hexakisphosphate. N-linked (GlcNAc...) asparagine glycans are attached at residues Asn437 and Asn452.

It belongs to the histidine acid phosphatase family. In terms of assembly, monomer.

The protein localises to the secreted. It carries out the reaction 1D-myo-inositol hexakisphosphate + H2O = 1D-myo-inositol 1,2,4,5,6-pentakisphosphate + phosphate. The enzyme catalyses 1D-myo-inositol 1,2,4,5,6-pentakisphosphate + H2O = 1D-myo-inositol 1,2,5,6-tetrakisphosphate + phosphate. It catalyses the reaction 1D-myo-inositol 1,2,5,6-tetrakisphosphate + H2O = 1D-myo-inositol 1,2,6-trisphosphate + phosphate. The catalysed reaction is 1D-myo-inositol 1,2,6-trisphosphate + H2O = 1D-myo-inositol 1,2-bisphosphate + phosphate. It carries out the reaction 1D-myo-inositol 1,2-bisphosphate + H2O = 1D-myo-inositol 2-phosphate + phosphate. Functionally, catalyzes the phosphate monoester hydrolysis of phytic acid (myo-inositol hexakisphosphate), which results in the stepwise formation of myo-inositol pentakis-, tetrakis-, tris-, bis-, and monophosphates, as well as the liberation of inorganic phosphate. Myo-inositol 2-monophosphate is the end product. Responsible of about 25% of the phytase activity. The residual phytase activity might be contributed by other cytosolic or cellular enzymes such as acid phosphatase that also degraded the substrate phytate. Is essential for human tissue damage during infection. The protein is Phytase PHO112 (PHO112) of Candida albicans (strain SC5314 / ATCC MYA-2876) (Yeast).